Reading from the N-terminus, the 129-residue chain is Small ribosomal subunit protein uS11 (129 aa).

The protein belongs to the universal ribosomal protein uS11 family. In terms of assembly, part of the 30S ribosomal subunit. Interacts with proteins S7 and S18. Binds to IF-3.

Functionally, located on the platform of the 30S subunit, it bridges several disparate RNA helices of the 16S rRNA. Forms part of the Shine-Dalgarno cleft in the 70S ribosome. This chain is Small ribosomal subunit protein uS11, found in Rhodopseudomonas palustris (strain HaA2).